The primary structure comprises 411 residues: Serine hydroxymethyltransferase (411 aa).

(6S)-5,6,7,8-tetrahydrofolate-binding positions include Leu119 and 123-125 (GHL). Lys228 carries the N6-(pyridoxal phosphate)lysine modification. 351-353 (SPF) provides a ligand contact to (6S)-5,6,7,8-tetrahydrofolate.

The protein belongs to the SHMT family. As to quaternary structure, homodimer. Requires pyridoxal 5'-phosphate as cofactor.

It localises to the cytoplasm. The enzyme catalyses (6R)-5,10-methylene-5,6,7,8-tetrahydrofolate + glycine + H2O = (6S)-5,6,7,8-tetrahydrofolate + L-serine. It functions in the pathway one-carbon metabolism; tetrahydrofolate interconversion. Its pathway is amino-acid biosynthesis; glycine biosynthesis; glycine from L-serine: step 1/1. Functionally, catalyzes the reversible interconversion of serine and glycine with tetrahydrofolate (THF) serving as the one-carbon carrier. This reaction serves as the major source of one-carbon groups required for the biosynthesis of purines, thymidylate, methionine, and other important biomolecules. Also exhibits THF-independent aldolase activity toward beta-hydroxyamino acids, producing glycine and aldehydes, via a retro-aldol mechanism. The polypeptide is Serine hydroxymethyltransferase (Clostridium botulinum (strain Eklund 17B / Type B)).